Consider the following 695-residue polypeptide: RING finger protein 145 (695 aa).

13 helical membrane passes run 53 to 73, 77 to 97, 123 to 143, 146 to 166, 168 to 188, 225 to 245, 275 to 295, 316 to 336, 340 to 360, 384 to 404, 410 to 430, 460 to 480, and 482 to 502; these read YLAL…LTLP, LAKL…HQIS, FITA…VMKT, IWLF…VPIE, IVVI…YFLA, LVVP…QIYT, YSLL…LTLC, TEGV…LQVV, FLLS…MLEI, SLCL…CQFF, LLII…TLFI, LLEF…TVFG, and WTVM…WLRA. The RING-type; atypical zinc finger occupies 537-575; sequence CSICYQDMNSAVITPCSHFFHPGCLKKWLYVQETCPLCH. Positions 585 to 603 are enriched in polar residues; the sequence is ATGESGSSTNPVSEQSATN. The interval 585-610 is disordered; the sequence is ATGESGSSTNPVSEQSATNPPLGPVS.

It localises to the membrane. This chain is RING finger protein 145 (rnf145), found in Xenopus tropicalis (Western clawed frog).